The sequence spans 48 residues: uncharacterized protein (48 aa).

A disordered region spans residues 1–30; sequence MLGRTKLGNRNAQANNNAKKKNGFQTHFDS.

This is an uncharacterized protein from Bacillus subtilis (strain 168).